The following is a 1025-amino-acid chain: MKFFALFIYRPVATILLSVAITLCGILGFRMLPVAPLPQVDFPVIMVSASLPGASPETMASSVATPLERSLGRIAGVSEMTSSSSLGSTRIILQFDFDRDINGAARDVQAAINAAQSLLPSGMPSRPTYRKANPSDAPIMILTLTSDTYSQGELYDFASTQLAPTISQIDGVGDVDVGGSSLPAVRVGLNPQALFNQGVSLDDVRTAISNANVRKPQGALEDGTHRWQIQTNDELKTAAEYQPLIIHYNNGGAVRLGDVATVTDSVQDVRNAGMTNAKPAILLMIRKLPEANIIQTVDSIRARLPELQSTIPAAIDLQIAQDRSPTIRASLEEVEQTLIISVALVILVVFLFLRSGRATIIPAVAVPVSLIGTFAAMYLCGFSLNNLSLMALTIATGFVVDDAIVVLENIARHLEAGMKPLQAALQGTREVGFTVLSMSLSLVAVFLPLLLMGGLPGRLLREFAVTLSVAIGISLLVSLTLTPMMCGWMLKASKPREQKRLRGFGRMLVALQQGYGKSLKWVLNHTRLVGAVLLGTIALNIWLYISIPKTFFPEQDTGVLMGGIQADQSISFQAMRGKLQDFMKIIRDDPAVDNVTGFTGGSRVNSGMMFITLKPRGERSETAQQIIDRLRKKLAKEPGANLFLMAVQDIRVGGRQANASYQYTLLSDDLAALREWEPKIRKKLATLPELADVNSDQEDNGAEMNLIYDRDTMARLGIDVQAANSLLNNAFGQRQISTIYQPMNQYKVVMEVDPRYTQDISALEKMFVINNEGKAIPLSYFAKWQPANAPLSVNHQGLSAASTISFNLPTGKSLSDASAAIDRAMTQLGVPSTVRGSFAGTAQVFQETMNSQVILIIAAIATVYIVLGILYESYVHPLTILSTLPSAGVGALLALELFNAPFSLIALIGIMLLIGIVKKNAIMMVDFALEAQRHGNLTPQEAIFQACLLRFRPIMMTTLAALFGALPLVLSGGDGSELRQPLGITIVGGLVMSQLLTLYTTPVVYLFFDRLRLRFSRKPKQAVTE.

Residues 1–6 (MKFFAL) lie on the Cytoplasmic side of the membrane. Residues 7–29 (FIYRPVATILLSVAITLCGILGF) traverse the membrane as a helical segment. Topologically, residues 30–335 (RMLPVAPLPQ…TIRASLEEVE (306 aa)) are periplasmic. A helical membrane pass occupies residues 336-353 (QTLIISVALVILVVFLFL). The Cytoplasmic segment spans residues 354-359 (RSGRAT). Residues 360–379 (IIPAVAVPVSLIGTFAAMYL) form a helical membrane-spanning segment. Over 380-388 (CGFSLNNLS) the chain is Periplasmic. The chain crosses the membrane as a helical span at residues 389-411 (LMALTIATGFVVDDAIVVLENIA). The Cytoplasmic segment spans residues 412-430 (RHLEAGMKPLQAALQGTRE). A helical transmembrane segment spans residues 431 to 453 (VGFTVLSMSLSLVAVFLPLLLMG). Topologically, residues 454-467 (GLPGRLLREFAVTL) are periplasmic. The chain crosses the membrane as a helical span at residues 468–490 (SVAIGISLLVSLTLTPMMCGWML). Residues 491–852 (KASKPREQKR…QVFQETMNSQ (362 aa)) are Cytoplasmic-facing. Residues 853-875 (VILIIAAIATVYIVLGILYESYV) traverse the membrane as a helical segment. Residues 876–894 (HPLTILSTLPSAGVGALLA) lie on the Periplasmic side of the membrane. The helical transmembrane segment at 895 to 917 (LELFNAPFSLIALIGIMLLIGIV) threads the bilayer. At 918–947 (KKNAIMMVDFALEAQRHGNLTPQEAIFQAC) the chain is on the cytoplasmic side. A helical membrane pass occupies residues 948–970 (LLRFRPIMMTTLAALFGALPLVL). Over 971 to 984 (SGGDGSELRQPLGI) the chain is Periplasmic. The helical transmembrane segment at 985 to 1007 (TIVGGLVMSQLLTLYTTPVVYLF) threads the bilayer. The Cytoplasmic portion of the chain corresponds to 1008–1025 (FDRLRLRFSRKPKQAVTE).

Belongs to the resistance-nodulation-cell division (RND) (TC 2.A.6) family. MdtC subfamily. Part of a tripartite efflux system composed of MdtA, MdtB and MdtC. MdtC forms a heteromultimer with MdtB.

The protein localises to the cell inner membrane. In terms of biological role, the MdtABC tripartite complex confers resistance against novobiocin and deoxycholate. The chain is Multidrug resistance protein MdtC from Escherichia coli O6:H1 (strain CFT073 / ATCC 700928 / UPEC).